We begin with the raw amino-acid sequence, 961 residues long: G protein-coupled receptor GPR1 (961 aa).

Over 1-56 (MITEGFPPNLNALKGSSLLEKRVDSLRQLNTTTVNQLLGLPGMTSTFTAPQLLQLR) the chain is Extracellular. The chain crosses the membrane as a helical span at residues 57–79 (IIAITASAVSLIAGCLGMFFLSK). At 80 to 91 (MDKRRKVFRHDL) the chain is on the cytoplasmic side. A helical membrane pass occupies residues 92–114 (IAFLIICDFLKAFILMIYPMIIL). Topologically, residues 115-133 (INNSVYATPAFFNTLGWFT) are extracellular. The helical transmembrane segment at 134–156 (AFAIEGADMAIMIFAIHFAILIF) threads the bilayer. Topologically, residues 157 to 178 (KPNWKWRNKRSGNMEGGLYKKR) are cytoplasmic. The chain crosses the membrane as a helical span at residues 179-198 (SYIWPITALVPAILASLAFI). At 199-250 (NYNKLNDDSDTTIILDNNNYNFPDSPRQGGYKPWSAWCYLPPKPYWYKIVLS) the chain is on the extracellular side. The helical transmembrane segment at 251-273 (WGPRYFIIIFIFAVYLSIYIFIT) threads the bilayer. Residues 274–619 (SESKRIKAQI…KKRRAQIQKN (346 aa)) lie on the Cytoplasmic side of the membrane. Serine 373 is subject to Phosphoserine. The interval 468-568 (AMYDNKNDNS…PADNIPTLSN (101 aa)) is disordered. A compositionally biased stretch (low complexity) spans 502 to 558 (NNNNDNDNDNNNSNNNNNNNNNNNNNNNNNNNNNNNNNNNNNNSNNIKNNVDNNNTN). Residues 620–642 (LRAIFIYPLSYIGIWLFPIIADA) form a helical membrane-spanning segment. At 643–822 (LQYNHEIKHG…AMLNNITAEE (180 aa)) the chain is on the extracellular side. Residues 783 to 796 (DSNDNKRTESDETK) are compositionally biased toward basic and acidic residues. The disordered stretch occupies residues 783–805 (DSNDNKRTESDETKTNSSDRSLP). Residues 823 to 843 (VEVPLFWRIIHHIPMLGGIDL) form a helical membrane-spanning segment. Over 844 to 961 (DELNRLLKIR…LIAFLRNGPL (118 aa)) the chain is Cytoplasmic. Serine 903 carries the phosphoserine modification.

The protein belongs to the G-protein coupled receptor GPR1/git3 family.

It is found in the cell membrane. Functionally, seems to associate with GPA2 and act as G protein-coupled receptor that senses glucose and controls filamentous growth. It acts upstream of adenylate cyclase and is required for glucose activation of cAMP synthesis in concert with a glucose phosphorylation-dependent mechanism. In Saccharomyces cerevisiae (strain ATCC 204508 / S288c) (Baker's yeast), this protein is G protein-coupled receptor GPR1 (GPR1).